Reading from the N-terminus, the 348-residue chain is D-alanine--D-alanine ligase (348 aa).

In terms of domain architecture, ATP-grasp spans lysine 132–valine 334. ATP is bound at residue leucine 162–glutamate 217. Residues aspartate 288, glutamate 301, and asparagine 303 each coordinate Mg(2+).

This sequence belongs to the D-alanine--D-alanine ligase family. Mg(2+) is required as a cofactor. Mn(2+) serves as cofactor.

Its subcellular location is the cytoplasm. The catalysed reaction is 2 D-alanine + ATP = D-alanyl-D-alanine + ADP + phosphate + H(+). The protein operates within cell wall biogenesis; peptidoglycan biosynthesis. Functionally, cell wall formation. This chain is D-alanine--D-alanine ligase, found in Streptococcus thermophilus (strain ATCC BAA-250 / LMG 18311).